Consider the following 199-residue polypeptide: NAD(P)H dehydrogenase (quinone) (199 aa).

The 187-residue stretch at 4–190 (VLVLYYSSYG…EGARHQGELV (187 aa)) folds into the Flavodoxin-like domain. FMN contacts are provided by residues 10–15 (SSYGHI) and 78–80 (TRY). Tyr-12 contacts NAD(+). Trp-98 serves as a coordination point for substrate. Residues 113–119 (STATQHG) and His-134 contribute to the FMN site.

This sequence belongs to the WrbA family. The cofactor is FMN.

It carries out the reaction a quinone + NADH + H(+) = a quinol + NAD(+). It catalyses the reaction a quinone + NADPH + H(+) = a quinol + NADP(+). In Paraburkholderia phymatum (strain DSM 17167 / CIP 108236 / LMG 21445 / STM815) (Burkholderia phymatum), this protein is NAD(P)H dehydrogenase (quinone).